A 426-amino-acid polypeptide reads, in one-letter code: UPF0229 protein Csal_0882 (426 aa).

A compositionally biased stretch (basic and acidic residues) spans 82-93 (FVEGDRLRRPGG). The tract at residues 82–109 (FVEGDRLRRPGGEGRGGSGEGSASNQGE) is disordered.

The protein belongs to the UPF0229 family.

In Chromohalobacter salexigens (strain ATCC BAA-138 / DSM 3043 / CIP 106854 / NCIMB 13768 / 1H11), this protein is UPF0229 protein Csal_0882.